Here is a 24-residue protein sequence, read N- to C-terminus: Attacin (24 aa).

It belongs to the attacin/sarcotoxin-2 family.

It is found in the secreted. Hemolymph antibacterial protein. This Heliothis virescens (Tobacco budworm moth) protein is Attacin.